The following is a 234-amino-acid chain: Thiamine-phosphate synthase (234 aa).

Residues Gln52–Lys56 and Asn84 each bind 4-amino-2-methyl-5-(diphosphooxymethyl)pyrimidine. Residues Asp85 and Asp104 each coordinate Mg(2+). Position 123 (Ser123) interacts with 4-amino-2-methyl-5-(diphosphooxymethyl)pyrimidine. Ser150–Thr152 is a binding site for 2-[(2R,5Z)-2-carboxy-4-methylthiazol-5(2H)-ylidene]ethyl phosphate. A 4-amino-2-methyl-5-(diphosphooxymethyl)pyrimidine-binding site is contributed by Lys153. A 2-[(2R,5Z)-2-carboxy-4-methylthiazol-5(2H)-ylidene]ethyl phosphate-binding site is contributed by Gly180.

It belongs to the thiamine-phosphate synthase family. Requires Mg(2+) as cofactor.

The catalysed reaction is 2-[(2R,5Z)-2-carboxy-4-methylthiazol-5(2H)-ylidene]ethyl phosphate + 4-amino-2-methyl-5-(diphosphooxymethyl)pyrimidine + 2 H(+) = thiamine phosphate + CO2 + diphosphate. It carries out the reaction 2-(2-carboxy-4-methylthiazol-5-yl)ethyl phosphate + 4-amino-2-methyl-5-(diphosphooxymethyl)pyrimidine + 2 H(+) = thiamine phosphate + CO2 + diphosphate. It catalyses the reaction 4-methyl-5-(2-phosphooxyethyl)-thiazole + 4-amino-2-methyl-5-(diphosphooxymethyl)pyrimidine + H(+) = thiamine phosphate + diphosphate. The protein operates within cofactor biosynthesis; thiamine diphosphate biosynthesis; thiamine phosphate from 4-amino-2-methyl-5-diphosphomethylpyrimidine and 4-methyl-5-(2-phosphoethyl)-thiazole: step 1/1. Condenses 4-methyl-5-(beta-hydroxyethyl)thiazole monophosphate (THZ-P) and 2-methyl-4-amino-5-hydroxymethyl pyrimidine pyrophosphate (HMP-PP) to form thiamine monophosphate (TMP). This is Thiamine-phosphate synthase from Nitrosospira multiformis (strain ATCC 25196 / NCIMB 11849 / C 71).